Here is a 146-residue protein sequence, read N- to C-terminus: Acidic phospholipase A2 S14-72F (146 aa).

The N-terminal stretch at 1 to 19 (MYPAHLLVLLAVCVSLLGA) is a signal peptide. Residues 20 to 27 (ASIPPQPL) constitute a propeptide that is removed on maturation. 7 cysteine pairs are disulfide-bonded: Cys-38/Cys-98, Cys-54/Cys-145, Cys-56/Cys-72, Cys-71/Cys-126, Cys-78/Cys-119, Cys-87/Cys-112, and Cys-105/Cys-117. The Ca(2+) site is built by Tyr-55, Gly-57, and Gly-59. His-75 is a catalytic residue. Asp-76 is a binding site for Ca(2+). Asp-120 is an active-site residue.

Belongs to the phospholipase A2 family. Group I subfamily. D49 sub-subfamily. The cofactor is Ca(2+). Expressed by the venom gland.

The protein resides in the secreted. The enzyme catalyses a 1,2-diacyl-sn-glycero-3-phosphocholine + H2O = a 1-acyl-sn-glycero-3-phosphocholine + a fatty acid + H(+). In terms of biological role, snake venom phospholipase A2 (PLA2) that inhibits collagen-induced platelet aggregation. PLA2 catalyzes the calcium-dependent hydrolysis of the 2-acyl groups in 3-sn-phosphoglycerides. The sequence is that of Acidic phospholipase A2 S14-72F from Austrelaps superbus (Lowland copperhead snake).